We begin with the raw amino-acid sequence, 86 residues long: Putative regulatory protein BBR47_37350 (86 aa).

Belongs to the RemA family.

The polypeptide is Putative regulatory protein BBR47_37350 (Brevibacillus brevis (strain 47 / JCM 6285 / NBRC 100599)).